Here is a 114-residue protein sequence, read N- to C-terminus: uncharacterized protein (114 aa).

The 109-residue stretch at 6 to 114 (IFKNIIQRKI…LGGKKLKSFS (109 aa)) folds into the HIT domain.

This is an uncharacterized protein from Buchnera aphidicola subsp. Acyrthosiphon pisum (strain APS) (Acyrthosiphon pisum symbiotic bacterium).